Consider the following 224-residue polypeptide: Transposase for insertion sequence element IS257 in transposon Tn4003 (224 aa).

A DNA-binding region (H-T-H motif) is located at residues 33-52; the sequence is EILRGRGVNVHHSTVYRWVQ. Positions 73 to 222 constitute an Integrase catalytic domain; that stretch reads WRIDETYIKI…SPCHEISIML (150 aa).

Its function is as follows. Involved in the transposition of the insertion sequence. The polypeptide is Transposase for insertion sequence element IS257 in transposon Tn4003 (Staphylococcus aureus).